Reading from the N-terminus, the 1342-residue chain is DNA-directed RNA polymerase subunit beta (1342 aa).

This sequence belongs to the RNA polymerase beta chain family. In terms of assembly, the RNAP catalytic core consists of 2 alpha, 1 beta, 1 beta' and 1 omega subunit. When a sigma factor is associated with the core the holoenzyme is formed, which can initiate transcription.

It catalyses the reaction RNA(n) + a ribonucleoside 5'-triphosphate = RNA(n+1) + diphosphate. In terms of biological role, DNA-dependent RNA polymerase catalyzes the transcription of DNA into RNA using the four ribonucleoside triphosphates as substrates. This chain is DNA-directed RNA polymerase subunit beta, found in Salmonella typhimurium (strain LT2 / SGSC1412 / ATCC 700720).